Consider the following 512-residue polypeptide: Maturase K (512 aa).

The protein belongs to the intron maturase 2 family. MatK subfamily.

It is found in the plastid. The protein localises to the chloroplast. Usually encoded in the trnK tRNA gene intron. Probably assists in splicing its own and other chloroplast group II introns. This Lemna minuta (Least duckweed) protein is Maturase K.